We begin with the raw amino-acid sequence, 417 residues long: MAVTQILVVFASALLLSMFFTGVDSTRSNETWHEHAVENPEEVAAMVDMSIRNSTARRRLGYFSCSTGNPIDDCWRCDRRWQSRRKHLANCAIGFGRNAIGGRDGRYYVVSDPNDDNPVNPKPGTLRHAVIQEEPLWIVFKRDMVITLKEELIMNSFKTIDGRGVNVHIANGACITIQFVTNIIIHGIHIHDCRPTGNAMVRSSPSHYGWRTMADGDGISIFGSSHIWIDHNSLSNCADGLIDAVMASTAITISNNYFTHHNEVMLLGHSDTYTRDKVMQVTIAYNHFGEGLIQRMPRCRHGYFHVVNNDYTHWEMYAIGGSASPTINSQGNRYLAPRNRFAKEVTKRDYAGQWQWRHWNWRSEGDLFLNGAFFTRSGSGLGASYARASSLAAKSSSLVGVITYNAGALNCRGGRRC.

The first 25 residues, 1 to 25 (MAVTQILVVFASALLLSMFFTGVDS), serve as a signal peptide directing secretion. Asn-29 and Asn-53 each carry an N-linked (GlcNAc...) asparagine glycan. The Ca(2+) site is built by Asp-215, Asp-239, and Asp-243. The active site involves Arg-295.

The protein belongs to the polysaccharide lyase 1 family. Requires Ca(2+) as cofactor.

It carries out the reaction Eliminative cleavage of (1-&gt;4)-alpha-D-galacturonan to give oligosaccharides with 4-deoxy-alpha-D-galact-4-enuronosyl groups at their non-reducing ends.. It participates in glycan metabolism; pectin degradation; 2-dehydro-3-deoxy-D-gluconate from pectin: step 2/5. The protein is Probable pectate lyase 20 of Arabidopsis thaliana (Mouse-ear cress).